A 607-amino-acid chain; its full sequence is Guanine nucleotide-binding protein-like 1 (607 aa).

The span at 1-14 (MPRKKPFSVKQKKK) shows a compositional bias: basic residues. The interval 1 to 81 (MPRKKPFSVK…GPRGYDPNRY (81 aa)) is disordered. Residues 15–26 (QLQDKRERKRGL) show a composition bias toward basic and acidic residues. Residues serine 32, serine 33, and serine 34 each carry the phosphoserine modification. A phosphothreonine mark is found at threonine 48 and threonine 50. 2 positions are modified to phosphoserine: serine 51 and serine 68. Residues 178-418 (WRQLWRVLEM…LCDCPGLIFP (241 aa)) form the CP-type G domain. 225-228 (NKVD) provides a ligand contact to GTP. Position 324 is a phosphoserine (serine 324). GTP is bound by residues 367–374 (GFPNVGKS) and 411–415 (DCPGL). The tract at residues 547 to 607 (GPAGDEEEEE…PYALLGEDEC (61 aa)) is disordered. Positions 550–584 (GDEEEEEEEELSSSCEEEGEEDRDADEEGEGDEDT) are enriched in acidic residues. Phosphoserine is present on residues serine 561, serine 562, and serine 563.

Belongs to the TRAFAC class YlqF/YawG GTPase family.

Its function is as follows. Possible regulatory or functional link with the histocompatibility cluster. In Macaca fascicularis (Crab-eating macaque), this protein is Guanine nucleotide-binding protein-like 1 (GNL1).